The sequence spans 64 residues: Beta-defensin 5 (64 aa).

The signal sequence occupies residues 1-23 (MKIHYLLFAFLLVLLSPLAGVFS). Intrachain disulfides connect C32–C60, C39–C53, and C43–C61.

This sequence belongs to the beta-defensin family.

The protein localises to the secreted. Its function is as follows. Has antibacterial activity. This chain is Beta-defensin 5 (Defb5), found in Mus musculus (Mouse).